A 360-amino-acid polypeptide reads, in one-letter code: F-box protein SKP2B (360 aa).

The 52-residue stretch at 25-76 (ISEWKDIPVELLMKILNLVDDRTVIIASCICSGWRDAVSLGLTRLSLSWCKK) folds into the F-box domain. LRR repeat units follow at residues 77 to 99 (NMNS…VLRQ), 101 to 126 (KPQL…DLSK), 127 to 152 (SSKI…NLSG), 153 to 178 (CTSF…NLCG), 180 to 205 (VEAV…NLGW), 206 to 231 (CENI…DLCS), 232 to 257 (CVLI…GLYY), 258 to 301 (CRNI…NISQ), and 302 to 333 (CTYL…VMSG).

Its function is as follows. Component of SCF(SKP2B) E3 ubiquitin ligase complexes, which mediate the ubiquitination and subsequent proteasomal degradation of the cyclin-dependent kinase inhibitor KRP1. Does not interact with auxin. In Arabidopsis thaliana (Mouse-ear cress), this protein is F-box protein SKP2B (SKP2B).